A 233-amino-acid chain; its full sequence is Protein Mis18-alpha (233 aa).

Phosphoserine occurs at positions 36, 39, and 40. Residues 80 to 178 enclose the Mis18 domain; the sequence is PLVFLCSGCR…NVEAVESYVL (99 aa). Residues cysteine 85, cysteine 88, cysteine 141, and cysteine 144 each coordinate Zn(2+). A Glycyl lysine isopeptide (Lys-Gly) (interchain with G-Cter in SUMO2) cross-link involves residue lysine 162. Residue serine 233 is modified to Phosphoserine.

It belongs to the mis18 family. In terms of assembly, homodimer, and heterodimer with OIP5/MIS18B. Identified in a complex containing MIS18A, OIP5/MIS18B, MIS18BP1, RBBP7 and RBBP4.

Its subcellular location is the nucleus. The protein localises to the chromosome. It is found in the centromere. Functionally, required for recruitment of CENPA to centromeres and normal chromosome segregation during mitosis. In Plecturocebus moloch (Dusky titi monkey), this protein is Protein Mis18-alpha (MIS18A).